We begin with the raw amino-acid sequence, 317 residues long: Putative AP2/ERF and B3 domain-containing protein Os01g0140700 (317 aa).

Residues 1–37 (MEQEAAMVVFSCNSGSGGSSSTTDSKQEEEEEEELAA) form a disordered region. Positions 27–37 (QEEEEEEELAA) are enriched in acidic residues. A DNA-binding region (AP2/ERF) is located at residues 66–121 (RYKGVVPQPNGRWGAQIYERHARVWLGTFPDEEAAARAYDVAALRFRGRDAVTNRA). Residues 178–287 (FEKAVTPSDV…EKHLLIDCKK (110 aa)) constitute a DNA-binding region (TF-B3).

Its subcellular location is the nucleus. The chain is Putative AP2/ERF and B3 domain-containing protein Os01g0140700 from Oryza sativa subsp. japonica (Rice).